Reading from the N-terminus, the 551-residue chain is MIGAFKRLGQKLFLTLLTASLIFASSIVTANASIAPNFKVFVMGPLEKVTDFNAFKDQLITLKNNGVYGITTDIWWGYVENAGENQFDWSYYKTYADTVRAAGLKWVPIMSTHACGGNVGDTVNIPIPSWVWTKDTQDNMQYKDEAGNWDNEAVSPWYSGLTQLYNEFYSSFASNFSSYKDIITKIYISGGPSGELRYPSYNPSHGWTYPGRGSLQCYSKAAITSFQNAMKSKYGTIAAVNSAWGTSLTDFSQISPPTDGDNFFTNGYKTTYGNDFLTWYQSVLTNELANIASVAHSCFDPVFNVPIGAKIAGVHWLYNSPTMPHAAEYCAGYYNYSTLLDQFKASNLAMTFTCLEMDDSNAYVSPYYSAPMTLVHYVANLANNKGIVHNGENALAISNNNQAYVNCANELTGYNFSGFTLLRLSNIVNSDGSVTSEMAPFVINIVTLTPNGTIPVTFTINNATTYYGQNVYIVGSTSDLGNWNTTYARGPASCPNYPTWTITLNLLPGEQIQFKAVKIDSSGNVTWEGGSNHTYTVPTSGTGSVTITWQN.

A signal peptide spans M1 to A32. Residue D73 coordinates substrate. E80 contributes to the Ca(2+) binding site. The substrate site is built by H113 and D121. Position 167 (E167) interacts with Ca(2+). E195 acts as the Proton donor in catalysis. Substrate is bound by residues K310, H315, and T353. Catalysis depends on E392, which acts as the Proton acceptor. Substrate-binding positions include N393 to A394 and R423. In terms of domain architecture, CBM20 spans L448 to N551.

It belongs to the glycosyl hydrolase 14 family. Monomer. Ca(2+) is required as a cofactor.

It carries out the reaction Hydrolysis of (1-&gt;4)-alpha-D-glucosidic linkages in polysaccharides so as to remove successive maltose units from the non-reducing ends of the chains.. This chain is Thermophilic beta-amylase, found in Thermoanaerobacterium thermosulfurigenes (Clostridium thermosulfurogenes).